Consider the following 336-residue polypeptide: Anthranilate phosphoribosyltransferase (336 aa).

Residues G79, 82-83 (GD), T87, 89-92 (NISS), 107-115 (KHGNRSVSS), and S119 each bind 5-phospho-alpha-D-ribose 1-diphosphate. G79 is a binding site for anthranilate. S91 is a binding site for Mg(2+). N110 is a binding site for anthranilate. R165 contributes to the anthranilate binding site. Mg(2+) is bound by residues D223 and E224.

This sequence belongs to the anthranilate phosphoribosyltransferase family. In terms of assembly, homodimer. It depends on Mg(2+) as a cofactor.

The catalysed reaction is N-(5-phospho-beta-D-ribosyl)anthranilate + diphosphate = 5-phospho-alpha-D-ribose 1-diphosphate + anthranilate. The protein operates within amino-acid biosynthesis; L-tryptophan biosynthesis; L-tryptophan from chorismate: step 2/5. Its function is as follows. Catalyzes the transfer of the phosphoribosyl group of 5-phosphorylribose-1-pyrophosphate (PRPP) to anthranilate to yield N-(5'-phosphoribosyl)-anthranilate (PRA). The chain is Anthranilate phosphoribosyltransferase from Tolumonas auensis (strain DSM 9187 / NBRC 110442 / TA 4).